Consider the following 290-residue polypeptide: Eukaryotic translation initiation factor 3 subunit G (290 aa).

The interval 1-34 (MSRLGNRAADWADDEEFDDPSALPAQQVTTNKDG) is disordered. The region spanning 210–288 (ATLRVTNVSE…LILRVEFAKR (79 aa)) is the RRM domain.

It belongs to the eIF-3 subunit G family. In terms of assembly, component of the eukaryotic translation initiation factor 3 (eIF-3) complex.

It is found in the cytoplasm. RNA-binding component of the eukaryotic translation initiation factor 3 (eIF-3) complex, which is involved in protein synthesis of a specialized repertoire of mRNAs and, together with other initiation factors, stimulates binding of mRNA and methionyl-tRNAi to the 40S ribosome. The eIF-3 complex specifically targets and initiates translation of a subset of mRNAs involved in cell proliferation. This subunit can bind 18S rRNA. The polypeptide is Eukaryotic translation initiation factor 3 subunit G (tif35) (Aspergillus fumigatus (strain CBS 144.89 / FGSC A1163 / CEA10) (Neosartorya fumigata)).